We begin with the raw amino-acid sequence, 211 residues long: Uracil phosphoribosyltransferase (211 aa).

Residues Arg-78, Arg-103, and 130 to 138 (DPMLATGGT) contribute to the 5-phospho-alpha-D-ribose 1-diphosphate site. Uracil-binding positions include Ile-195 and 200 to 202 (GDA). Position 201 (Asp-201) interacts with 5-phospho-alpha-D-ribose 1-diphosphate.

Belongs to the UPRTase family. Mg(2+) serves as cofactor.

The enzyme catalyses UMP + diphosphate = 5-phospho-alpha-D-ribose 1-diphosphate + uracil. The protein operates within pyrimidine metabolism; UMP biosynthesis via salvage pathway; UMP from uracil: step 1/1. With respect to regulation, allosterically activated by GTP. Functionally, catalyzes the conversion of uracil and 5-phospho-alpha-D-ribose 1-diphosphate (PRPP) to UMP and diphosphate. This Paenarthrobacter aurescens (strain TC1) protein is Uracil phosphoribosyltransferase.